A 290-amino-acid chain; its full sequence is Probable 2-(5''-triphosphoribosyl)-3'-dephosphocoenzyme-A synthase (290 aa).

This sequence belongs to the CitG/MdcB family.

The catalysed reaction is 3'-dephospho-CoA + ATP = 2'-(5''-triphospho-alpha-D-ribosyl)-3'-dephospho-CoA + adenine. Its function is as follows. Involved in the formation of 2-(5''-phosphoribosyl)-3'-dephosphocoenzyme-A, the prosthetic group of the acyl-carrier protein of the malonate decarboxylase. The sequence is that of Probable 2-(5''-triphosphoribosyl)-3'-dephosphocoenzyme-A synthase from Pseudomonas fluorescens (strain Pf0-1).